A 242-amino-acid chain; its full sequence is Purine nucleoside phosphorylase SCO2081 (242 aa).

Zn(2+) is bound by residues histidine 68, cysteine 106, and histidine 123.

Belongs to the purine nucleoside phosphorylase YfiH/LACC1 family. In terms of assembly, homodimer. Cu(2+) is required as a cofactor. Zn(2+) serves as cofactor.

The enzyme catalyses adenosine + phosphate = alpha-D-ribose 1-phosphate + adenine. It catalyses the reaction S-methyl-5'-thioadenosine + phosphate = 5-(methylsulfanyl)-alpha-D-ribose 1-phosphate + adenine. It carries out the reaction inosine + phosphate = alpha-D-ribose 1-phosphate + hypoxanthine. The catalysed reaction is adenosine + H2O + H(+) = inosine + NH4(+). Functionally, purine nucleoside enzyme that catalyzes the phosphorolysis of adenosine and inosine nucleosides, yielding D-ribose 1-phosphate and the respective free bases, adenine and hypoxanthine. Also catalyzes the phosphorolysis of S-methyl-5'-thioadenosine into adenine and S-methyl-5-thio-alpha-D-ribose 1-phosphate. Also has adenosine deaminase activity. This chain is Purine nucleoside phosphorylase SCO2081, found in Streptomyces coelicolor (strain ATCC BAA-471 / A3(2) / M145).